Here is a 441-residue protein sequence, read N- to C-terminus: MIIEHSAEVRGKTPLYRHLYVQVLAAIAAGILLGHFYPDIGTELKPLGDAFIRLVKMIIAPVIFLTVATGIAGMTDLAKVGRVAGKAMIYFLAFSTLALVVGLVVANVVQPGAGMHIDPASLDAKAVATYAEKAHEQSITGFLMNIIPTTLVGAFAEGDILQVLFISVLFGISLAIVGKKAEPVVDFLQALTLPIFRLVAILMKAAPIGAFGAMAFTIGKYGIASIANLAMLIGTFYLTSFLFVFIVLGAVARYNGFSILSLIRYIKEELLLVLGTSSSEAALPGLMNKMEKAGCKRSVVGLVIPTGYSFNLDGTNIYMTLAALFIAQATDTPLSYGDQILLLLVAMLSSKGAAGITGAGFITLAATLSVVPSVPVAGMALILGIDRFMSECRALTNFVGNAVATIVVAKWEGELDQAQLSAALGGEASVEAIPAVVQPAE.

At 1-30 (MIIEHSAEVRGKTPLYRHLYVQVLAAIAAG) the chain is on the cytoplasmic side. A helical membrane pass occupies residues 31 to 49 (ILLGHFYPDIGTELKPLGD). Residues 50-68 (AFIRLVKMIIAPVIFLTVA) are Periplasmic-facing. The chain crosses the membrane as a helical span at residues 69 to 87 (TGIAGMTDLAKVGRVAGKA). Topologically, residues 88-99 (MIYFLAFSTLAL) are cytoplasmic. Residues 100-118 (VVGLVVANVVQPGAGMHID) traverse the membrane as a helical segment. The Periplasmic portion of the chain corresponds to 119–149 (PASLDAKAVATYAEKAHEQSITGFLMNIIPT). The chain crosses the membrane as a helical span at residues 150 to 168 (TLVGAFAEGDILQVLFISV). The Cytoplasmic segment spans residues 169 to 171 (LFG). Residues 172-190 (ISLAIVGKKAEPVVDFLQA) form a helical membrane-spanning segment. At 191-209 (LTLPIFRLVAILMKAAPIG) the chain is on the periplasmic side. A helical membrane pass occupies residues 210 to 228 (AFGAMAFTIGKYGIASIAN). At 229-241 (LAMLIGTFYLTSF) the chain is on the cytoplasmic side. The chain crosses the membrane as a helical span at residues 242–260 (LFVFIVLGAVARYNGFSIL). Residues 261 to 281 (SLIRYIKEELLLVLGTSSSEA) lie on the Periplasmic side of the membrane. Residues 282–300 (ALPGLMNKMEKAGCKRSVV) form a helical membrane-spanning segment. The Cytoplasmic portion of the chain corresponds to 301–320 (GLVIPTGYSFNLDGTNIYMT). A helical membrane pass occupies residues 321–339 (LAALFIAQATDTPLSYGDQ). Over 340–350 (ILLLLVAMLSS) the chain is Periplasmic. Residues 351–369 (KGAAGITGAGFITLAATLS) form a helical membrane-spanning segment. The Cytoplasmic segment spans residues 370-378 (VVPSVPVAG). Residues 379–398 (MALILGIDRFMSECRALTNF) form a helical membrane-spanning segment. The Periplasmic portion of the chain corresponds to 399–405 (VGNAVAT). Residues 406–424 (IVVAKWEGELDQAQLSAAL) form a helical membrane-spanning segment. At 425 to 441 (GGEASVEAIPAVVQPAE) the chain is on the cytoplasmic side.

Belongs to the dicarboxylate/amino acid:cation symporter (DAACS) (TC 2.A.23) family.

The protein resides in the cell inner membrane. Functionally, responsible for the transport of dicarboxylates such as succinate, fumarate, and malate from the periplasm across the inner membrane. This transport system plays an important role in the energy supply of rhizobium-legume symbionts. The chain is C4-dicarboxylate transport protein (dctA) from Rhizobium meliloti (strain 1021) (Ensifer meliloti).